The chain runs to 344 residues: Mitochondrial mRNA pseudouridine synthase Rpusd3 (344 aa).

The transit peptide at 1–36 directs the protein to the mitochondrion; that stretch reads MGALRVLRYVSMIWRPELGSCARQRDAGFGTEARRP. The tract at residues 25–53 is disordered; it reads RDAGFGTEARRPSQPHRSSKHKDLVEDQP.

The protein belongs to the pseudouridine synthase RluA family. As to quaternary structure, forms a regulatory protein-RNA complex, consisting of RCC1L, NGRN, RPUSD3, RPUSD4, TRUB2, FASTKD2 and 16S mt-rRNA.

The protein localises to the mitochondrion matrix. It carries out the reaction a uridine in mRNA = a pseudouridine in mRNA. Catalyzes uridine to pseudouridine isomerization (pseudouridylation) of specific mitochondrial mRNAs (mt-mRNAs), a post-transcriptional modification necessary for their translation. Acts at position 390 in COXI mt-mRNA and at position 697-699 in mitochondrial COXIII mt-mRNA. As a component of a functional protein-RNA module, consisting of RCC1L, NGRN, RPUSD3, RPUSD4, TRUB2, FASTKD2 and 16S mitochondrial ribosomal RNA (16S mt-rRNA), controls 16S mt-rRNA abundance and may play a role in mitochondrial ribosome biogenesis. The sequence is that of Mitochondrial mRNA pseudouridine synthase Rpusd3 (Rpusd3) from Mus musculus (Mouse).